A 697-amino-acid polypeptide reads, in one-letter code: Zinc finger and BTB domain-containing protein 24 (697 aa).

One can recognise a BTB domain in the interval 10 to 133 (GQLVVHSDAH…AYTDFQNNHS (124 aa)). The segment covering 131–142 (NHSSPKPTTLNT) has biased composition (polar residues). 2 disordered regions span residues 131 to 176 (NHSS…EEKS) and 209 to 254 (EQIA…SRYS). Positions 159 to 171 (KRKRGRPKKVNTL) form a DNA-binding region, a.T hook. Residues 212 to 245 (AAKEKEESEPTCEPSREEEMPVEKDENYDPKTED) show a composition bias toward basic and acidic residues. 8 consecutive C2H2-type zinc fingers follow at residues 294 to 316 (ARCK…QRSH), 322 to 344 (FKCN…TRMH), 350 to 372 (YTCT…MSLH), 378 to 400 (FTCD…YRVH), 406 to 428 (PECK…LRTH), 434 to 456 (FTCE…IRIH), 462 to 484 (YSCG…CILH), and 490 to 512 (FSCP…LKIH). Positions 652–697 (QEQTEELHLATSTSDPAQHLQLTQEPGPPPPTHHVPQPTPLGQEQS) are disordered. Pro residues predominate over residues 677-690 (PGPPPPTHHVPQPT).

It belongs to the krueppel C2H2-type zinc-finger protein family. Interacts with MN1. As to expression, widely expressed, with highest levels in naive B-cells.

The protein resides in the nucleus. Its function is as follows. May be involved in BMP2-induced transcription. The sequence is that of Zinc finger and BTB domain-containing protein 24 (ZBTB24) from Homo sapiens (Human).